Reading from the N-terminus, the 237-residue chain is Ribosomal RNA large subunit methyltransferase E (237 aa).

Gly80, Trp82, Asp108, Asp124, and Asp148 together coordinate S-adenosyl-L-methionine. The active-site Proton acceptor is Lys188.

Belongs to the class I-like SAM-binding methyltransferase superfamily. RNA methyltransferase RlmE family.

It is found in the cytoplasm. The catalysed reaction is uridine(2552) in 23S rRNA + S-adenosyl-L-methionine = 2'-O-methyluridine(2552) in 23S rRNA + S-adenosyl-L-homocysteine + H(+). Functionally, specifically methylates the uridine in position 2552 of 23S rRNA at the 2'-O position of the ribose in the fully assembled 50S ribosomal subunit. The protein is Ribosomal RNA large subunit methyltransferase E of Jannaschia sp. (strain CCS1).